The following is a 29-amino-acid chain: MDIVSLAWAALMIVFTFSLSLVVWGRSGL.

A helical transmembrane segment spans residues 3 to 23 (IVSLAWAALMIVFTFSLSLVV).

It belongs to the PetN family. The 4 large subunits of the cytochrome b6-f complex are cytochrome b6, subunit IV (17 kDa polypeptide, PetD), cytochrome f and the Rieske protein, while the 4 small subunits are PetG, PetL, PetM and PetN. The complex functions as a dimer.

The protein localises to the plastid membrane. Component of the cytochrome b6-f complex, which mediates electron transfer between photosystem II (PSII) and photosystem I (PSI), cyclic electron flow around PSI, and state transitions. This Cuscuta exaltata (Tall dodder) protein is Cytochrome b6-f complex subunit 8.